Here is a 624-residue protein sequence, read N- to C-terminus: tRNA uridine 5-carboxymethylaminomethyl modification enzyme MnmG (624 aa).

FAD-binding positions include 16-21 (GAGHAG), Val128, and Ser183. 275-289 (GPRYCPSIEDKVVRF) provides a ligand contact to NAD(+). Gln372 is a binding site for FAD.

It belongs to the MnmG family. As to quaternary structure, homodimer. Heterotetramer of two MnmE and two MnmG subunits. It depends on FAD as a cofactor.

It localises to the cytoplasm. In terms of biological role, NAD-binding protein involved in the addition of a carboxymethylaminomethyl (cmnm) group at the wobble position (U34) of certain tRNAs, forming tRNA-cmnm(5)s(2)U34. The protein is tRNA uridine 5-carboxymethylaminomethyl modification enzyme MnmG of Geobacter metallireducens (strain ATCC 53774 / DSM 7210 / GS-15).